A 383-amino-acid chain; its full sequence is Alkanesulfonate monooxygenase (383 aa).

It belongs to the SsuD family. In terms of assembly, homotetramer.

It carries out the reaction an alkanesulfonate + FMNH2 + O2 = an aldehyde + FMN + sulfite + H2O + 2 H(+). Its function is as follows. Catalyzes the desulfonation of aliphatic sulfonates. This is Alkanesulfonate monooxygenase from Erwinia pyrifoliae (strain DSM 12163 / CIP 106111 / Ep16/96).